The primary structure comprises 413 residues: MWLSKFQFPSRSIFKGVFLGHKLPLLVRLTSTTTNSKSNGSIPTQYTELSPLLVKQAEKYEAELKDLDKDLSCGIHFDVNKQKHYAKLSALTDTFIEYKEKLNELKSLQEMIVSDPSLRAEAEQEYAELVPQYETTSSRLVNKLLPPHPFADKPSLLELRPGVGGIEAMIFTQNLLDMYIGYANYRKWKYRIISKNENESGSGIIDAILSIEEAGSYDRLRFEAGVHRVQRIPSTETKGRTHTSTAAVVVLPQIGDESAKSIDAYERTFKPGEIRVDIMRASGKGGQHVNTTDSAVRLTHIPSGIVVSMQDERSQHKNKAKAFTILRARLAEKERLEKEEKERKARKSQVSSTNRSDKIRTYNFPQNRITDHRCGFTLLDLPGVLSGERLDEVIEAMSKYDSTERAKELLESN.

Glutamine 287 carries the post-translational modification N5-methylglutamine. The interval 335-363 (RLEKEEKERKARKSQVSSTNRSDKIRTYN) is disordered.

This sequence belongs to the prokaryotic/mitochondrial release factor family. Post-translationally, methylation of glutamine in the GGQ triplet is conserved from bacteria to mammals. N5-methylated on Gln-287 by MTQ1.

It is found in the mitochondrion. Mitochondrial peptide chain release factor that directs the termination of translation in response to the peptide chain termination codons UAA and UAG. This Saccharomyces cerevisiae (strain ATCC 204508 / S288c) (Baker's yeast) protein is Peptide chain release factor 1, mitochondrial (MRF1).